The primary structure comprises 367 residues: tRNA(Ile)-lysidine synthase (367 aa).

32–37 serves as a coordination point for ATP; sequence SGGSDS.

This sequence belongs to the tRNA(Ile)-lysidine synthase family.

Its subcellular location is the cytoplasm. It catalyses the reaction cytidine(34) in tRNA(Ile2) + L-lysine + ATP = lysidine(34) in tRNA(Ile2) + AMP + diphosphate + H(+). Functionally, ligates lysine onto the cytidine present at position 34 of the AUA codon-specific tRNA(Ile) that contains the anticodon CAU, in an ATP-dependent manner. Cytidine is converted to lysidine, thus changing the amino acid specificity of the tRNA from methionine to isoleucine. The polypeptide is tRNA(Ile)-lysidine synthase (Hyphomonas neptunium (strain ATCC 15444)).